The chain runs to 312 residues: tRNA pseudouridine synthase B (312 aa).

Asp-46 serves as the catalytic Nucleophile. Substrate is bound by residues Tyr-74, Tyr-177, and Leu-198.

The protein belongs to the pseudouridine synthase TruB family. Type 1 subfamily.

It catalyses the reaction uridine(55) in tRNA = pseudouridine(55) in tRNA. Its function is as follows. Responsible for synthesis of pseudouridine from uracil-55 in the psi GC loop of transfer RNAs. The protein is tRNA pseudouridine synthase B of Buchnera aphidicola subsp. Schizaphis graminum (strain Sg).